Consider the following 319-residue polypeptide: Lambda-crystallin (319 aa).

At alanine 2 the chain carries N-acetylalanine. Phosphoserine is present on serine 3. Residues 16 to 17 (LV), aspartate 36, glutamate 97, and lysine 102 contribute to the NAD(+) site. Serine 111 carries the post-translational modification Phosphoserine.

It belongs to the 3-hydroxyacyl-CoA dehydrogenase family. As to quaternary structure, homodimer. As to expression, detected in eye lens, kidney, liver, heart, lung, brain and testis.

It is found in the cytoplasm. The catalysed reaction is L-gulonate + NAD(+) = 3-dehydro-L-gulonate + NADH + H(+). Its activity is regulated as follows. Inhibited by malonate and by inorganic phosphate. In terms of biological role, functions as a crystallin in the rabbit eye lens. Has high L-gulonate 3-dehydrogenase activity. It also exhibits low dehydrogenase activity toward L-3-hydroxybutyrate (HBA) and L-threonate. This Oryctolagus cuniculus (Rabbit) protein is Lambda-crystallin (CRYL1).